A 241-amino-acid chain; its full sequence is Tubulin-like protein alpha-4B (241 aa).

The segment covering 1–10 (MRHQQTERQD) has biased composition (basic and acidic residues). The disordered stretch occupies residues 1–20 (MRHQQTERQDPSQPLSRQHG). Asp-10 lines the GTP pocket. Asp-10 is a binding site for Mg(2+). Residues 11-20 (PSQPLSRQHG) show a composition bias toward polar residues. GTP contacts are provided by Ser-79, Gly-83, Thr-84, Thr-118, Asn-145, and Asn-167. The active site involves Glu-193.

It belongs to the tubulin family. It depends on Mg(2+) as a cofactor. In terms of processing, some glutamate residues at the C-terminus are polyglutamylated, resulting in polyglutamate chains on the gamma-carboxyl group. Polyglutamylation plays a key role in microtubule severing by spastin (SPAST). SPAST preferentially recognizes and acts on microtubules decorated with short polyglutamate tails: severing activity by SPAST increases as the number of glutamates per tubulin rises from one to eight, but decreases beyond this glutamylation threshold. Glutamylation is also involved in cilia motility. Some glutamate residues at the C-terminus are monoglycylated but not polyglycylated due to the absence of functional TTLL10 in human. Monoglycylation is mainly limited to tubulin incorporated into cilia and flagella axonemes, which is required for their stability and maintenance. Flagella glycylation controls sperm motility. Both polyglutamylation and monoglycylation can coexist on the same protein on adjacent residues, and lowering glycylation levels increases polyglutamylation, and reciprocally.

Its subcellular location is the cytoplasm. The protein localises to the cytoskeleton. It carries out the reaction GTP + H2O = GDP + phosphate + H(+). Its function is as follows. Tubulin is the major constituent of microtubules, a cylinder consisting of laterally associated linear protofilaments composed ofalpha- and beta-tubulin heterodimers. This is Tubulin-like protein alpha-4B (TUBA4B) from Homo sapiens (Human).